The primary structure comprises 145 residues: UPF0310 protein Mvan_0064 (145 aa).

It belongs to the UPF0310 family.

In Mycolicibacterium vanbaalenii (strain DSM 7251 / JCM 13017 / BCRC 16820 / KCTC 9966 / NRRL B-24157 / PYR-1) (Mycobacterium vanbaalenii), this protein is UPF0310 protein Mvan_0064.